The primary structure comprises 58 residues: Metallothionein (58 aa).

The interval 1–29 (MPDPCCIDKCECKEGGCKAGCKCTSCRCT) is beta. A divalent metal cation contacts are provided by C5, C6, C10, C12, C17, C21, C23, C26, C28, C31, C34, C38, C40, C46, C50, C54, C56, and C57. Residues 30–58 (PCEKCSSGCKCTTKEDCCKTCTKPCSCCP) are alpha.

It belongs to the metallothionein superfamily. Type 3 family.

In terms of biological role, metallothioneins have a high content of cysteine residues that bind various heavy metals. Class I MTS in marine crustacea are involved in the sequestration of elevated levels of heavy-metal ions. This is Metallothionein from Carcinus maenas (Common shore crab).